A 266-amino-acid polypeptide reads, in one-letter code: RNA polymerase II subunit A C-terminal domain phosphatase ssu-72 (266 aa).

Residues 1–31 form a disordered region; it reads MSAVDTPTGAASSSKPDQNEQNGQNGGREDS. A compositionally biased stretch (polar residues) spans 9 to 23; it reads GAASSSKPDQNEQNG.

This sequence belongs to the SSU72 phosphatase family. Component of the cleavage and polyadenylation factor (CPF) complex.

The protein localises to the nucleus. The catalysed reaction is O-phospho-L-seryl-[protein] + H2O = L-seryl-[protein] + phosphate. It catalyses the reaction O-phospho-L-threonyl-[protein] + H2O = L-threonyl-[protein] + phosphate. Its function is as follows. Processively dephosphorylates Ser-5 of the heptad repeats YSPTSPS in the C-terminal domain of the largest RNA polymerase II subunit (rpb-1). Component of the cleavage and polyadenylation factor (CPF) complex, which plays a key role in polyadenylation-dependent pre-mRNA 3'-end formation and cooperates with cleavage factors including the CFIA complex and NAB4/CFIB. Ssu-72 is required for 3'-end formation of snoRNAs. The polypeptide is RNA polymerase II subunit A C-terminal domain phosphatase ssu-72 (ssu-72) (Neurospora crassa (strain ATCC 24698 / 74-OR23-1A / CBS 708.71 / DSM 1257 / FGSC 987)).